The primary structure comprises 261 residues: Membrane protein insertase MisCA (261 aa).

The first 22 residues, 1–22, serve as a signal peptide directing secretion; sequence MLLKRRIGLLLSMVGVFMLLAG. Cys23 is lipidated: N-palmitoyl cysteine. Cys23 carries S-diacylglycerol cysteine lipidation. A run of 5 helical transmembrane segments spans residues 61-81, 131-151, 174-194, 204-224, and 225-245; these read YGLS…PLMI, LAGC…YHAI, YILP…MMAG, MMLW…PAAL, and SLYW…IKGP.

It belongs to the OXA1/ALB3/YidC family. Type 2 subfamily. In terms of assembly, mostly monomeric, it may also form dimers. Interacts with SpoIIIAE. Forms a complex with the F(1)F(0) ATP synthase in which can be found the alpha, beta, gamma, delta and epsilon subunits of F(1) and a, b and subunits of F(0). YqgA is found in the same complex.

It localises to the cell membrane. Its function is as follows. Required for the insertion and/or proper folding and/or complex formation of integral membrane proteins into the membrane. Involved in integration of membrane proteins that insert both dependently and independently of the Sec translocase complex, as well as at least some lipoproteins. Also involved in protein secretion processes. Essential for sporulation by activating sigma factor SpoIIIG/SigG after engulfment is completed in the prespore, maybe by acting on SpoIIIAE. It has an overlapping, although partly distinct, function compared to YqjG(MisCB). The chain is Membrane protein insertase MisCA (misCA) from Bacillus subtilis (strain 168).